The primary structure comprises 238 residues: MQLPALQSAKLIRRYKRFLADIELPTGDVMTIHCANTGAMTGCGEKGDTIWYSHSDSQTRKYPHSWELTQLANGQLCCINTHRSNQLVFEALQNKQIKELAMYDEIYPEVKYGEENSRIDFLLKGKGLPDCYVEVKSITLVKGNLGMFPDAVTTRGQKHVRELLAMKKQGHRAVVLFAGLHNGFDRFKIAEYIDPEYDRLLKEAMEQGVEAYAYAGQFEISNEIPTALSLTESVPYIK.

This sequence belongs to the SfsA family.

This chain is Sugar fermentation stimulation protein homolog, found in Haemophilus influenzae (strain PittGG).